The chain runs to 407 residues: Peptidase T (407 aa).

H82 is a binding site for Zn(2+). The active site involves D84. D143 contributes to the Zn(2+) binding site. Residue E177 is the Proton acceptor of the active site. Residues E178, D200, and H382 each coordinate Zn(2+).

The protein belongs to the peptidase M20B family. Zn(2+) serves as cofactor.

The protein localises to the cytoplasm. It catalyses the reaction Release of the N-terminal residue from a tripeptide.. In terms of biological role, cleaves the N-terminal amino acid of tripeptides. The protein is Peptidase T of Streptococcus pyogenes serotype M1.